The chain runs to 48 residues: Large ribosomal subunit protein bL32 (48 aa).

The protein belongs to the bacterial ribosomal protein bL32 family.

This is Large ribosomal subunit protein bL32 from Helicobacter pylori (strain P12).